The primary structure comprises 160 residues: Large ribosomal subunit protein uL22c (160 aa).

The protein belongs to the universal ribosomal protein uL22 family. In terms of assembly, part of the 50S ribosomal subunit.

The protein localises to the plastid. It localises to the chloroplast. This protein binds specifically to 23S rRNA. In terms of biological role, the globular domain of the protein is located near the polypeptide exit tunnel on the outside of the subunit, while an extended beta-hairpin is found that lines the wall of the exit tunnel in the center of the 70S ribosome. In Eucalyptus globulus subsp. globulus (Tasmanian blue gum), this protein is Large ribosomal subunit protein uL22c (rpl22).